A 51-amino-acid chain; its full sequence is Large ribosomal subunit protein eL39 (51 aa).

The segment at 1–23 (MPSQKSFRTKQKLAKAQKQNRPL) is disordered.

This sequence belongs to the eukaryotic ribosomal protein eL39 family. As to quaternary structure, component of the large ribosomal subunit. Mature ribosomes consist of a small (40S) and a large (60S) subunit. The 40S subunit contains about 32 different proteins and 1 molecule of RNA (18S). The 60S subunit contains 45 different proteins and 3 molecules of RNA (25S, 5.8S and 5S).

The protein localises to the cytoplasm. Component of the ribosome, a large ribonucleoprotein complex responsible for the synthesis of proteins in the cell. The small ribosomal subunit (SSU) binds messenger RNAs (mRNAs) and translates the encoded message by selecting cognate aminoacyl-transfer RNA (tRNA) molecules. The large subunit (LSU) contains the ribosomal catalytic site termed the peptidyl transferase center (PTC), which catalyzes the formation of peptide bonds, thereby polymerizing the amino acids delivered by tRNAs into a polypeptide chain. The nascent polypeptides leave the ribosome through a tunnel in the LSU and interact with protein factors that function in enzymatic processing, targeting, and the membrane insertion of nascent chains at the exit of the ribosomal tunnel. The sequence is that of Large ribosomal subunit protein eL39 from Candida albicans (strain SC5314 / ATCC MYA-2876) (Yeast).